Here is a 36-residue protein sequence, read N- to C-terminus: Zinc metalloproteinase-disintegrin-like VaH1 (36 aa).

In terms of domain architecture, Peptidase M12B spans 1–36 (MVTKYSSIFMSPILSNPPILYFSDCSREXYQKXLTN).

It belongs to the venom metalloproteinase (M12B) family. P-III subfamily. P-IIIa sub-subfamily. Monomer. Zn(2+) is required as a cofactor. The N-terminus is blocked. In terms of processing, glycosylated. In terms of tissue distribution, expressed by the venom gland.

It localises to the secreted. Inhibited by EDTA, but not inhibited by iodoacetamide, PMSF and pepstatin A. Its function is as follows. Snake venom zinc metalloprotease that exhibits strong hemorrhagic activity. It also degrades alpha-chain of fibrinogen (FGA), but not the beta- and the gamma-chains. Possesses potent azocaseinolytic activity and cleaves insulin B-chain, hydrolyzing it at positions Ala(14)-Leu(15), followed by Tyr(16)-Leu(17) and His(10)-Leu(11). In vivo, subcutaneous injection into mice induces strong hemorrhage. This Vipera ammodytes ammodytes (Western sand viper) protein is Zinc metalloproteinase-disintegrin-like VaH1.